An 881-amino-acid polypeptide reads, in one-letter code: DNA mismatch repair protein MutS (881 aa).

ATP is bound at residue 632–639 (GPNMGGKS).

This sequence belongs to the DNA mismatch repair MutS family.

This protein is involved in the repair of mismatches in DNA. It is possible that it carries out the mismatch recognition step. This protein has a weak ATPase activity. The protein is DNA mismatch repair protein MutS of Chelativorans sp. (strain BNC1).